The chain runs to 320 residues: Malate dehydrogenase (320 aa).

NAD(+)-binding positions include 10-15 and Asp34; that span reads GAGQIG. The substrate site is built by Arg83 and Arg89. NAD(+)-binding positions include Asn96 and 119–121; that span reads ITN. Residues Asn121 and Arg152 each coordinate substrate. His176 acts as the Proton acceptor in catalysis.

This sequence belongs to the LDH/MDH superfamily. MDH type 3 family.

It catalyses the reaction (S)-malate + NAD(+) = oxaloacetate + NADH + H(+). Functionally, catalyzes the reversible oxidation of malate to oxaloacetate. This chain is Malate dehydrogenase, found in Ruegeria pomeroyi (strain ATCC 700808 / DSM 15171 / DSS-3) (Silicibacter pomeroyi).